Consider the following 265-residue polypeptide: 5'-nucleotidase SurE (265 aa).

A divalent metal cation is bound by residues aspartate 8, aspartate 9, serine 39, and asparagine 96.

This sequence belongs to the SurE nucleotidase family. The cofactor is a divalent metal cation.

The protein localises to the cytoplasm. It catalyses the reaction a ribonucleoside 5'-phosphate + H2O = a ribonucleoside + phosphate. Functionally, nucleotidase that shows phosphatase activity on nucleoside 5'-monophosphates. The chain is 5'-nucleotidase SurE from Dehalococcoides mccartyi (strain CBDB1).